A 130-amino-acid chain; its full sequence is KTYERCELARAMKRLGLDGYWGYSLGHWVCAAKYESNFNTGATNYNPGDQSTDYGILQINSRWWCNDGKTPRTKNACKIQCRELLTADITASVNCAKRVVRDPNGMGAWVAWTKNCKGRDVSPWIRDCGL.

Residues 1–130 (KTYERCELAR…VSPWIRDCGL (130 aa)) form the C-type lysozyme domain. Intrachain disulfides connect C6-C128, C30-C116, C65-C81, and C77-C95. Active-site residues include E35 and D53.

This sequence belongs to the glycosyl hydrolase 22 family. In terms of assembly, monomer.

The protein resides in the secreted. The enzyme catalyses Hydrolysis of (1-&gt;4)-beta-linkages between N-acetylmuramic acid and N-acetyl-D-glucosamine residues in a peptidoglycan and between N-acetyl-D-glucosamine residues in chitodextrins.. In terms of biological role, lysozymes have primarily a bacteriolytic function; those in tissues and body fluids are associated with the monocyte-macrophage system and enhance the activity of immunoagents. The protein is Lysozyme C (LYZ) of Chelonia mydas (Green sea-turtle).